Consider the following 292-residue polypeptide: Ribosomal RNA small subunit methyltransferase H (292 aa).

S-adenosyl-L-methionine-binding positions include 32-34 (GGH), Asp-51, Leu-87, Asp-101, and Gln-108.

This sequence belongs to the methyltransferase superfamily. RsmH family.

It localises to the cytoplasm. It catalyses the reaction cytidine(1402) in 16S rRNA + S-adenosyl-L-methionine = N(4)-methylcytidine(1402) in 16S rRNA + S-adenosyl-L-homocysteine + H(+). Specifically methylates the N4 position of cytidine in position 1402 (C1402) of 16S rRNA. This is Ribosomal RNA small subunit methyltransferase H from Pseudothermotoga lettingae (strain ATCC BAA-301 / DSM 14385 / NBRC 107922 / TMO) (Thermotoga lettingae).